Reading from the N-terminus, the 169-residue chain is 6,7-dimethyl-8-ribityllumazine synthase (169 aa).

Residues Phe-24, 58 to 60 (ALE), and 82 to 84 (AVI) each bind 5-amino-6-(D-ribitylamino)uracil. 87–88 (ET) is a (2S)-2-hydroxy-3-oxobutyl phosphate binding site. The Proton donor role is filled by His-90. Asn-115 contacts 5-amino-6-(D-ribitylamino)uracil. Residue Arg-129 coordinates (2S)-2-hydroxy-3-oxobutyl phosphate.

It belongs to the DMRL synthase family.

The catalysed reaction is (2S)-2-hydroxy-3-oxobutyl phosphate + 5-amino-6-(D-ribitylamino)uracil = 6,7-dimethyl-8-(1-D-ribityl)lumazine + phosphate + 2 H2O + H(+). The protein operates within cofactor biosynthesis; riboflavin biosynthesis; riboflavin from 2-hydroxy-3-oxobutyl phosphate and 5-amino-6-(D-ribitylamino)uracil: step 1/2. In terms of biological role, catalyzes the formation of 6,7-dimethyl-8-ribityllumazine by condensation of 5-amino-6-(D-ribitylamino)uracil with 3,4-dihydroxy-2-butanone 4-phosphate. This is the penultimate step in the biosynthesis of riboflavin. This Burkholderia vietnamiensis (strain G4 / LMG 22486) (Burkholderia cepacia (strain R1808)) protein is 6,7-dimethyl-8-ribityllumazine synthase.